Here is a 360-residue protein sequence, read N- to C-terminus: UDP-N-acetylglucosamine--N-acetylmuramyl-(pentapeptide) pyrophosphoryl-undecaprenol N-acetylglucosamine transferase (360 aa).

UDP-N-acetyl-alpha-D-glucosamine is bound by residues 11–13 (TGG), Asn120, Arg161, Ser188, and Gln282.

This sequence belongs to the glycosyltransferase 28 family. MurG subfamily.

It is found in the cell inner membrane. The enzyme catalyses di-trans,octa-cis-undecaprenyl diphospho-N-acetyl-alpha-D-muramoyl-L-alanyl-D-glutamyl-meso-2,6-diaminopimeloyl-D-alanyl-D-alanine + UDP-N-acetyl-alpha-D-glucosamine = di-trans,octa-cis-undecaprenyl diphospho-[N-acetyl-alpha-D-glucosaminyl-(1-&gt;4)]-N-acetyl-alpha-D-muramoyl-L-alanyl-D-glutamyl-meso-2,6-diaminopimeloyl-D-alanyl-D-alanine + UDP + H(+). It functions in the pathway cell wall biogenesis; peptidoglycan biosynthesis. In terms of biological role, cell wall formation. Catalyzes the transfer of a GlcNAc subunit on undecaprenyl-pyrophosphoryl-MurNAc-pentapeptide (lipid intermediate I) to form undecaprenyl-pyrophosphoryl-MurNAc-(pentapeptide)GlcNAc (lipid intermediate II). The protein is UDP-N-acetylglucosamine--N-acetylmuramyl-(pentapeptide) pyrophosphoryl-undecaprenol N-acetylglucosamine transferase of Synechococcus sp. (strain RCC307).